Reading from the N-terminus, the 617-residue chain is Estrogen receptor (617 aa).

The segment at 1-54 is disordered; that stretch reads MSEEQARAEAPAGARQRRRSELEGYSVSLASLKLSPMYPEEEQRTTGGISSTAH. Residues 1-186 form a modulating region; it reads MSEEQARAEA…AIGLVKEIRY (186 aa). 2 consecutive NR C4-type zinc fingers follow at residues 187–207 and 223–247; these read CSVC…CEGC and CPAT…LRKC. Residues 187 to 252 constitute a DNA-binding region (nuclear receptor); it reads CSVCSDYASG…RLRKCYEVGM (66 aa). Residues 253–315 form a hinge region; the sequence is MKGGFRKERG…GGGVADVVCM (63 aa). The tract at residues 269–303 is disordered; it reads NRRPSGLKERERGYSKAQSGSDVREALPQDGQSSS. The region spanning 316–552 is the NR LBD domain; it reads SPEQVLLLLL…DLLLEMLDAH (237 aa). Positions 568-617 are disordered; the sequence is VSSSPTTTATTPTTNTTTTTTTTTHHPSNGSTCPADLPSNPPGPGQSPSP. Residues 573–591 are compositionally biased toward low complexity; that stretch reads TTTATTPTTNTTTTTTTTT. Pro residues predominate over residues 606–617; sequence SNPPGPGQSPSP.

The protein belongs to the nuclear hormone receptor family. NR3 subfamily. As to quaternary structure, binds DNA as a homodimer. Can form a heterodimer with ER-beta. As to expression, ovary and testis.

The protein localises to the nucleus. The steroid hormones and their receptors are involved in the regulation of eukaryotic gene expression and affect cellular proliferation and differentiation in target tissues. In Ictalurus punctatus (Channel catfish), this protein is Estrogen receptor (esr1).